The primary structure comprises 230 residues: MTSDDRIKLEPIWKEALRDEFEQPYMAQLREFLRQEHAAGKEIYPPGPLIFNALNSTPLNNVKVVILGQDPYHGPNQAHGLCFSVQPGVPTPPSLVNIYKELKRDLNIDIPNHGCLQSWADQGVLLLNTTLTVERANAASHAGKGWQHFTDRIIQVVSEHQPHLVFLLWGAHAQSKQKLVDATKHLVLTSVHPSPLSAYKGFLGNGHFGRANKYLEQNGIEPIDWRLPVL.

The active-site Proton acceptor is Asp-70.

It belongs to the uracil-DNA glycosylase (UDG) superfamily. UNG family.

The protein localises to the cytoplasm. It carries out the reaction Hydrolyzes single-stranded DNA or mismatched double-stranded DNA and polynucleotides, releasing free uracil.. In terms of biological role, excises uracil residues from the DNA which can arise as a result of misincorporation of dUMP residues by DNA polymerase or due to deamination of cytosine. This Pseudomonas savastanoi pv. phaseolicola (strain 1448A / Race 6) (Pseudomonas syringae pv. phaseolicola (strain 1448A / Race 6)) protein is Uracil-DNA glycosylase.